A 286-amino-acid polypeptide reads, in one-letter code: Phosphatidylglycerol--prolipoprotein diacylglyceryl transferase (286 aa).

Transmembrane regions (helical) follow at residues 25–45, 65–85, 103–123, and 127–147; these read WYAL…RMLL, FILW…VLFY, GGMS…LFGW, and VPIL…LFLG. Arg-148 lines the a 1,2-diacyl-sn-glycero-3-phospho-(1'-sn-glycerol) pocket. 3 helical membrane-spanning segments follow: residues 188–208, 212–232, and 248–268; these read AGLE…AGAL, GLII…GEFF, and MGML…ITTW.

It belongs to the Lgt family.

The protein resides in the cell inner membrane. The catalysed reaction is L-cysteinyl-[prolipoprotein] + a 1,2-diacyl-sn-glycero-3-phospho-(1'-sn-glycerol) = an S-1,2-diacyl-sn-glyceryl-L-cysteinyl-[prolipoprotein] + sn-glycerol 1-phosphate + H(+). It functions in the pathway protein modification; lipoprotein biosynthesis (diacylglyceryl transfer). In terms of biological role, catalyzes the transfer of the diacylglyceryl group from phosphatidylglycerol to the sulfhydryl group of the N-terminal cysteine of a prolipoprotein, the first step in the formation of mature lipoproteins. This is Phosphatidylglycerol--prolipoprotein diacylglyceryl transferase from Rhodopseudomonas palustris (strain ATCC BAA-98 / CGA009).